A 389-amino-acid polypeptide reads, in one-letter code: ELAV-like protein 2 (389 aa).

RRM domains follow at residues 66-145 (TNLI…YARP), 153-233 (ANLY…FANN), and 306-384 (WCIF…FKTS).

It belongs to the RRM elav family. As to quaternary structure, part of a ribonucleoprotein (RNP) complex, at least composed of elavl1/elrA and/or elavl2/elrB, igf2bp3/vg1RBP, ddx6/Xp54, ybx2/frgy2, lsm14b/rap55b and, in a subset of RNP complexes, stau1/staufen. Binds RNA as a homooligomer. In terms of tissue distribution, expressed in brain, testis and ovary. Ovarian expression is restricted to follicle cells surrounding the oocyte. From the early tailbud stage, expression is neural-specific and is seen in both the central and peripheral nervous system in differentiating neurons but not proliferating precursors. Expressed in the retina from stage 32 with expression becoming restricted to the ganglion cell layer by later stages.

Its subcellular location is the cytoplasm. It is found in the cell cortex. Binds to poly-U elements and AU-rich elements (AREs) in the 3'-UTR of target mRNAs. Required for the vegetal localization of vg1 mRNA. Probably required for nervous system development. In Xenopus laevis (African clawed frog), this protein is ELAV-like protein 2 (elavl2).